The following is a 205-amino-acid chain: Holliday junction branch migration complex subunit RuvA (205 aa).

The tract at residues 1–64 is domain I; that stretch reads MIGRLRGIIL…EDAQLLFGFN (64 aa). The domain II stretch occupies residues 65 to 142; it reads DKQERALFRE…KGLSGDLFNP (78 aa). The segment at 143-156 is flexible linker; it reads VSDIPLASPASAES. Residues 157 to 205 form a domain III region; it reads RASDPEAEAAAALVALGYKPQEASRMISKIARPEADCETLIRDALRAAL.

Belongs to the RuvA family. In terms of assembly, homotetramer. Forms an RuvA(8)-RuvB(12)-Holliday junction (HJ) complex. HJ DNA is sandwiched between 2 RuvA tetramers; dsDNA enters through RuvA and exits via RuvB. An RuvB hexamer assembles on each DNA strand where it exits the tetramer. Each RuvB hexamer is contacted by two RuvA subunits (via domain III) on 2 adjacent RuvB subunits; this complex drives branch migration. In the full resolvosome a probable DNA-RuvA(4)-RuvB(12)-RuvC(2) complex forms which resolves the HJ.

The protein resides in the cytoplasm. In terms of biological role, the RuvA-RuvB-RuvC complex processes Holliday junction (HJ) DNA during genetic recombination and DNA repair, while the RuvA-RuvB complex plays an important role in the rescue of blocked DNA replication forks via replication fork reversal (RFR). RuvA specifically binds to HJ cruciform DNA, conferring on it an open structure. The RuvB hexamer acts as an ATP-dependent pump, pulling dsDNA into and through the RuvAB complex. HJ branch migration allows RuvC to scan DNA until it finds its consensus sequence, where it cleaves and resolves the cruciform DNA. This is Holliday junction branch migration complex subunit RuvA from Pectobacterium carotovorum subsp. carotovorum (strain PC1).